We begin with the raw amino-acid sequence, 90 residues long: Co-chaperonin GroES (90 aa).

Belongs to the GroES chaperonin family. Heptamer of 7 subunits arranged in a ring. Interacts with the chaperonin GroEL.

It localises to the cytoplasm. Its function is as follows. Together with the chaperonin GroEL, plays an essential role in assisting protein folding. The GroEL-GroES system forms a nano-cage that allows encapsulation of the non-native substrate proteins and provides a physical environment optimized to promote and accelerate protein folding. GroES binds to the apical surface of the GroEL ring, thereby capping the opening of the GroEL channel. This chain is Co-chaperonin GroES, found in Phocaeicola vulgatus (strain ATCC 8482 / DSM 1447 / JCM 5826 / CCUG 4940 / NBRC 14291 / NCTC 11154) (Bacteroides vulgatus).